The primary structure comprises 365 residues: Medium chain reductase pydE (365 aa).

The region spanning 21-362 is the Enoyl reductase (ER) domain; it reads KLIDSLPVPP…SKRARGKVLI (342 aa). NADP(+) is bound by residues 185 to 188, Tyr226, 274 to 275, and 354 to 355; these read SGSV, IG, and KR.

The protein belongs to the zinc-containing alcohol dehydrogenase family. As to quaternary structure, monomer.

It functions in the pathway mycotoxin biosynthesis. In terms of biological role, medium chain reductase; part of the gene cluster that mediates the biosynthesis of pyrrocidines, fungal natural products containing a macrocyclic para-cyclophane connected to a decahydrofluorene ring system that show potent antibiotic activities toward Gram-negative bacteria. Within the pathway, pydE functions synergistically with pydB, pydX and pydZ to form the cyclophane. The pathway begins with the PKS-NRPS pydA which, with the help of the trans-enoyl reductase pydC, synthesizes the polyketide-tyrosyl acyl thioester product which can be reductively off-loaded by the terminal reductase (R) domain in pydA. The alpha/beta hydrolase pydG is then required to catalyze the subsequent Knoevenagel condensation that affords the 3-pyrrolin-2-one ring, whereas the four proteins pydB, pydE, pydX and pydZ then function synergistically to form the cyclophane. PydB and the membrane-bound pydX and pydZ are lipid-binding proteins that can sequester and mold the pdyG product into the inverse S-shape. Binding of the medium chain reductase pydE to the complex would trigger the cascade oxidative cyclization. PydY is involved in the Diels-Alder cycloaddition that forms the decahydrofluorene core. Additional non-enzymatic hydroxylation yields pyrrocidine A2 which can be further reduced into pyrrocidine B by an endogenous reductase. In Acremonium sp, this protein is Medium chain reductase pydE.